Reading from the N-terminus, the 388-residue chain is Peptide chain release factor subunit 1 (388 aa).

This sequence belongs to the eukaryotic release factor 1 family. As to quaternary structure, heterodimer of two subunits, one of which binds GTP.

It localises to the cytoplasm. Directs the termination of nascent peptide synthesis (translation) in response to the termination codons UAA, UAG and UGA. The chain is Peptide chain release factor subunit 1 (prf1) from Pyrobaculum aerophilum (strain ATCC 51768 / DSM 7523 / JCM 9630 / CIP 104966 / NBRC 100827 / IM2).